Reading from the N-terminus, the 757-residue chain is Cap-specific mRNA (nucleoside-2'-O-)-methyltransferase 1 (757 aa).

Residues 1–61 are disordered; that stretch reads MFQSNQYDEY…EDDEEEEDTP (61 aa). 2 stretches are compositionally biased toward acidic residues: residues 18 to 32 and 40 to 59; these read EENE…NENE and GDQD…EEED. Residues 62-108 form the G-patch domain; it reads KLSFGAKFLAKHGHIEGQGLGKEKDGRIDLIEVDRFQSTKGLGFAEN. Residues 214-438 form the RrmJ-type SAM-dependent 2'-O-MTase domain; that stretch reads IFINRAAVKM…ERYIICKNFL (225 aa). 3 residues coordinate S-adenosyl-L-methionine: Gly-257, Glu-301, and Asp-352. Catalysis depends on Lys-392, which acts as the Proton acceptor. Positions 538–548 are enriched in basic residues; that stretch reads HKNRQKHHHNN. Residues 538–670 are disordered; it reads HKNRQKHHHN…NNNNNNNNKN (133 aa). Positions 549–569 are enriched in low complexity; it reads HSNNNNNNNNSNNNNNNNNQH. Residues 570–581 show a composition bias toward basic residues; that stretch reads QHQHHQHQHHQN. The segment covering 597–668 has biased composition (low complexity); the sequence is NNNINNNSNN…NNNNNNNNNN (72 aa).

The catalysed reaction is a 5'-end (N(7)-methyl 5'-triphosphoguanosine)-ribonucleoside in mRNA + S-adenosyl-L-methionine = a 5'-end (N(7)-methyl 5'-triphosphoguanosine)-(2'-O-methyl-ribonucleoside) in mRNA + S-adenosyl-L-homocysteine + H(+). S-adenosyl-L-methionine-dependent methyltransferase that mediates mRNA cap1 2'-O-ribose methylation to the 5'-cap structure of mRNAs. Methylates the ribose of the first nucleotide of a m(7)GpppG-capped mRNA to produce m(7)GpppNmp (cap1). Cap1 modification is linked to higher levels of translation. This is Cap-specific mRNA (nucleoside-2'-O-)-methyltransferase 1 from Dictyostelium discoideum (Social amoeba).